The chain runs to 776 residues: Methionine--tRNA ligase (776 aa).

The 'HIGH' region signature appears at Pro10–His20. Zn(2+)-binding residues include Cys143, Cys146, Cys156, and Cys159. A 'KMSKS' region motif is present at residues Lys375 to Ser379. Lys378 is an ATP binding site. Residues Asp676–Arg776 form the tRNA-binding domain.

It belongs to the class-I aminoacyl-tRNA synthetase family. MetG type 1 subfamily. As to quaternary structure, homodimer. Requires Zn(2+) as cofactor.

It localises to the cytoplasm. The enzyme catalyses tRNA(Met) + L-methionine + ATP = L-methionyl-tRNA(Met) + AMP + diphosphate. Is required not only for elongation of protein synthesis but also for the initiation of all mRNA translation through initiator tRNA(fMet) aminoacylation. The protein is Methionine--tRNA ligase (metG) of Nanoarchaeum equitans (strain Kin4-M).